The sequence spans 256 residues: uncharacterized protein (256 aa).

The HTH deoR-type domain occupies 7–62 (PAERQKTLLNLISKQSVISINNLVNILGVSHMTVRRDIQKLEEDGKVISVSGGVQL). Residues 24–43 (ISINNLVNILGVSHMTVRRD) constitute a DNA-binding region (H-T-H motif).

This is an uncharacterized protein from Haemophilus influenzae (strain ATCC 51907 / DSM 11121 / KW20 / Rd).